Here is a 119-residue protein sequence, read N- to C-terminus: MGTRTLQFEISDSHEKEEDLLHKNHLMQDEIARLRLEIHTIKNQILEKKYLKDIEIIKRKHEDLQKALKQNGEKSTKTIAHYSGQLTALTDENTMLRSKLEKEKQSRQRLTKWNHTIVD.

A coiled-coil region spans residues 15 to 112 (EKEEDLLHKN…EKQSRQRLTK (98 aa)).

This chain is Putative ankyrin repeat domain-containing protein 26-like 1 (ANKRD36BP1), found in Homo sapiens (Human).